The chain runs to 951 residues: Protein translocase subunit SecA (951 aa).

Residues glutamine 90, 108–112 (GEGKT), and aspartate 509 each bind ATP.

It belongs to the SecA family. In terms of assembly, monomer and homodimer. Part of the essential Sec protein translocation apparatus which comprises SecA, SecYEG and auxiliary proteins SecDF. Other proteins may also be involved.

It localises to the cell inner membrane. Its subcellular location is the cellular thylakoid membrane. The protein localises to the cytoplasm. It carries out the reaction ATP + H2O + cellular proteinSide 1 = ADP + phosphate + cellular proteinSide 2.. Functionally, part of the Sec protein translocase complex. Interacts with the SecYEG preprotein conducting channel. Has a central role in coupling the hydrolysis of ATP to the transfer of proteins into and across the cell membrane, serving as an ATP-driven molecular motor driving the stepwise translocation of polypeptide chains across the membrane. In terms of biological role, probably participates in protein translocation into and across both the cytoplasmic and thylakoid membranes in cyanobacterial cells. The chain is Protein translocase subunit SecA from Prochlorococcus marinus (strain MIT 9303).